The sequence spans 425 residues: Glutamyl-tRNA reductase (425 aa).

Substrate is bound by residues 49–52 (TCNR), Ser-109, 114–116 (EGQ), and Gln-120. The active-site Nucleophile is Cys-50. 189 to 194 (GAGETG) is a binding site for NADP(+).

Belongs to the glutamyl-tRNA reductase family. In terms of assembly, homodimer.

The catalysed reaction is (S)-4-amino-5-oxopentanoate + tRNA(Glu) + NADP(+) = L-glutamyl-tRNA(Glu) + NADPH + H(+). It participates in porphyrin-containing compound metabolism; protoporphyrin-IX biosynthesis; 5-aminolevulinate from L-glutamyl-tRNA(Glu): step 1/2. It functions in the pathway porphyrin-containing compound metabolism; chlorophyll biosynthesis. Its function is as follows. Catalyzes the NADPH-dependent reduction of glutamyl-tRNA(Glu) to glutamate 1-semialdehyde (GSA). This is Glutamyl-tRNA reductase from Chlorobium phaeovibrioides (strain DSM 265 / 1930) (Prosthecochloris vibrioformis (strain DSM 265)).